We begin with the raw amino-acid sequence, 307 residues long: tRNA dimethylallyltransferase 1 (307 aa).

Residue 10 to 17 (GPTASGKT) coordinates ATP. 12–17 (TASGKT) is a binding site for substrate. The segment at 35–38 (DSRQ) is interaction with substrate tRNA.

It belongs to the IPP transferase family. As to quaternary structure, monomer. Mg(2+) is required as a cofactor.

The enzyme catalyses adenosine(37) in tRNA + dimethylallyl diphosphate = N(6)-dimethylallyladenosine(37) in tRNA + diphosphate. Its function is as follows. Catalyzes the transfer of a dimethylallyl group onto the adenine at position 37 in tRNAs that read codons beginning with uridine, leading to the formation of N6-(dimethylallyl)adenosine (i(6)A). In Geotalea daltonii (strain DSM 22248 / JCM 15807 / FRC-32) (Geobacter daltonii), this protein is tRNA dimethylallyltransferase 1.